The following is a 433-amino-acid chain: Mannan endo-1,4-beta-mannosidase 2 (433 aa).

A signal peptide spans 1 to 28; sequence MAAPTGNGPVIPILGFLTCVAFIYLSFG. N46 is a glycosylation site (N-linked (GlcNAc...) asparagine). Position 98 (W98) interacts with substrate. N169 carries N-linked (GlcNAc...) asparagine glycosylation. N214 is a substrate binding site. E215 (proton donor) is an active-site residue. Y295 contacts substrate. E335 acts as the Nucleophile in catalysis. W377 provides a ligand contact to substrate.

The protein belongs to the glycosyl hydrolase 5 (cellulase A) family. Expressed in roots, stems, leaves and seeds.

It is found in the secreted. It catalyses the reaction Random hydrolysis of (1-&gt;4)-beta-D-mannosidic linkages in mannans, galactomannans and glucomannans.. This Arabidopsis thaliana (Mouse-ear cress) protein is Mannan endo-1,4-beta-mannosidase 2 (MAN2).